Here is a 623-residue protein sequence, read N- to C-terminus: Ciliated left-right organizer metallopeptidase (623 aa).

Positions 1–20 are cleaved as a signal peptide; the sequence is MSFLLCIGILLLPWFPCVCG. Residues 21–578 are Extracellular-facing; that stretch reads KCIFDQIQRS…LFLVSEAKIS (558 aa). Histidine 249 serves as a coordination point for Zn(2+). Glutamate 250 is a catalytic residue. Zn(2+) is bound by residues histidine 253 and histidine 326. A helical transmembrane segment spans residues 579 to 599; sequence LAAVLSLMAVFALLSAAVLLY. Residues 600-623 are Cytoplasmic-facing; sequence RKNLSVRVHAASYRTPLPHILYRN.

It belongs to the peptidase M8 family. Zn(2+) is required as a cofactor. As to expression, expressed specifically in dorsal forerunner cells (DFCs) that form a ciliated Kupffer's vesicle later.

The protein resides in the membrane. In terms of biological role, plays an essential role for patterning the left-right axis. Requires solely on the left side, downstream of the leftward flow, but upstream of dand5, a nodal inhibitor involved in left-right patterning. The chain is Ciliated left-right organizer metallopeptidase (cirop) from Danio rerio (Zebrafish).